A 310-amino-acid chain; its full sequence is tRNA pseudouridine synthase B (310 aa).

Catalysis depends on aspartate 49, which acts as the Nucleophile.

It belongs to the pseudouridine synthase TruB family. Type 1 subfamily.

It catalyses the reaction uridine(55) in tRNA = pseudouridine(55) in tRNA. Responsible for synthesis of pseudouridine from uracil-55 in the psi GC loop of transfer RNAs. This is tRNA pseudouridine synthase B from Sinorhizobium medicae (strain WSM419) (Ensifer medicae).